The sequence spans 187 residues: dTTP/UTP pyrophosphatase (187 aa).

Asp65 serves as the catalytic Proton acceptor.

This sequence belongs to the Maf family. YhdE subfamily. A divalent metal cation serves as cofactor.

Its subcellular location is the cytoplasm. The catalysed reaction is dTTP + H2O = dTMP + diphosphate + H(+). It catalyses the reaction UTP + H2O = UMP + diphosphate + H(+). In terms of biological role, nucleoside triphosphate pyrophosphatase that hydrolyzes dTTP and UTP. May have a dual role in cell division arrest and in preventing the incorporation of modified nucleotides into cellular nucleic acids. The protein is dTTP/UTP pyrophosphatase of Deinococcus geothermalis (strain DSM 11300 / CIP 105573 / AG-3a).